The chain runs to 161 residues: PHD finger-containing protein 4 (161 aa).

Residues 30 to 80 (KKPCEVCGSNANDHAIMTCFLCRDTREHIYCARVHLRSVPRMWICEECRMN) form a PHD-type zinc finger. Residues cysteine 33, cysteine 36, cysteine 48, cysteine 51, histidine 57, cysteine 60, cysteine 74, and cysteine 77 each coordinate Zn(2+). Over residues 114-132 (TMTSSDSGNQISATHQQPP) the composition is skewed to polar residues. The disordered stretch occupies residues 114–161 (TMTSSDSGNQISATHQQPPQAHASPVAVPMDTSSSDNQQPPSDSESAI). A compositionally biased stretch (low complexity) spans 146–161 (SSSDNQQPPSDSESAI).

Interacts directly with AIPP3/BDT1.

Together with AIPP3/BDT1, cooperates to form a BAH-PHD bivalent histone reader complex able to read histone H3 lysine 27 trimethylation (H3K27me3) histone marks in order to regulate transcription, especially to prevent early flowering; promotes AIPP3/BDT1 binding to H3K27me3. This Arabidopsis thaliana (Mouse-ear cress) protein is PHD finger-containing protein 4.